The primary structure comprises 339 residues: Ketol-acid reductoisomerase (NADP(+)) (339 aa).

One can recognise a KARI N-terminal Rossmann domain in the interval 1–182 (MRVYYDRDAD…GGGRSGIIET (182 aa)). Residues 24 to 27 (YGSQ), Lys48, Ser51, Thr53, and 83 to 86 (DELQ) each bind NADP(+). His108 is a catalytic residue. Gly134 serves as a coordination point for NADP(+). The KARI C-terminal knotted domain maps to 183–328 (NFREECETDL…AKLRGMMPWI (146 aa)). Mg(2+) contacts are provided by Asp191, Glu195, Glu227, and Glu231. A substrate-binding site is contributed by Ser252.

Belongs to the ketol-acid reductoisomerase family. Mg(2+) serves as cofactor.

The enzyme catalyses (2R)-2,3-dihydroxy-3-methylbutanoate + NADP(+) = (2S)-2-acetolactate + NADPH + H(+). The catalysed reaction is (2R,3R)-2,3-dihydroxy-3-methylpentanoate + NADP(+) = (S)-2-ethyl-2-hydroxy-3-oxobutanoate + NADPH + H(+). Its pathway is amino-acid biosynthesis; L-isoleucine biosynthesis; L-isoleucine from 2-oxobutanoate: step 2/4. The protein operates within amino-acid biosynthesis; L-valine biosynthesis; L-valine from pyruvate: step 2/4. In terms of biological role, involved in the biosynthesis of branched-chain amino acids (BCAA). Catalyzes an alkyl-migration followed by a ketol-acid reduction of (S)-2-acetolactate (S2AL) to yield (R)-2,3-dihydroxy-isovalerate. In the isomerase reaction, S2AL is rearranged via a Mg-dependent methyl migration to produce 3-hydroxy-3-methyl-2-ketobutyrate (HMKB). In the reductase reaction, this 2-ketoacid undergoes a metal-dependent reduction by NADPH to yield (R)-2,3-dihydroxy-isovalerate. This chain is Ketol-acid reductoisomerase (NADP(+)), found in Rhizobium rhizogenes (strain K84 / ATCC BAA-868) (Agrobacterium radiobacter).